Reading from the N-terminus, the 320-residue chain is MGSSDETIFDLPPYIKVFKDGRVERLHSSPYVPPSLNDPETGGVSWKDVPISSVVSARIYLPKINNHDEKLPIIVYFHGAGFCLESAFKSFFHTYVKHFVAEAKAIAVSVEFRLAPENHLPAAYEDCWEALQWVASHVGLDISSLKTCIDKDPWIINYADFDRLYLWGDSTGANIVHNTLIRSGKEKLNGGKVKILGAILYYPYFLIRTSSKQSDYMENEYRSYWKLAYPDAPGGNDNPMINPTAENAPDLAGYGCSRLLISMVADEARDITLLYIDALEKSGWKGELDVADFDKQYFELFEMETEVAKNMLRRLASFIK.

The Involved in the stabilization of the negatively charged intermediate by the formation of the oxyanion hole signature appears at 78 to 80 (HGA). Position 81 (Gly81) interacts with (-)-tabersonine. The Proton acceptor role is filled by Ser170. Asp266 is a catalytic residue. Position 297 (Tyr297) interacts with (-)-tabersonine. Tyr297 functions as the Proton donor/acceptor in the catalytic mechanism.

Belongs to the 'GDXG' lipolytic enzyme family. As to quaternary structure, interacts with dehydroprecondylocarpine acetate synthase (DPAS). Expressed in leaf epidermis.

Its subcellular location is the cytoplasm. The protein localises to the cytosol. It is found in the nucleus. The enzyme catalyses dehydrosecodine = (-)-tabersonine. The catalysed reaction is dihydroprecondylocarpine acetate = (-)-tabersonine + acetate + H(+). The protein operates within alkaloid biosynthesis. Component of iboga and aspidosperma monoterpenoid indole alkaloids (MIAs, e.g. tabersonine and catharanthine) biosynthesis pathway from 19E-geissoschizine, psychoactive compounds likely to be used in the treatment of opioid dependence. Catalyzes the conversion of dehydrosecodine to tabersonine, a precursor of vindoline; this process starts with the conversion of dihydroprecondylocarpine acetate to dehydrosecodine. The chain is Tabersonine synthase from Catharanthus roseus (Madagascar periwinkle).